A 94-amino-acid polypeptide reads, in one-letter code: Exodeoxyribonuclease 7 small subunit (94 aa).

The protein belongs to the XseB family. In terms of assembly, heterooligomer composed of large and small subunits.

It is found in the cytoplasm. The catalysed reaction is Exonucleolytic cleavage in either 5'- to 3'- or 3'- to 5'-direction to yield nucleoside 5'-phosphates.. Bidirectionally degrades single-stranded DNA into large acid-insoluble oligonucleotides, which are then degraded further into small acid-soluble oligonucleotides. The chain is Exodeoxyribonuclease 7 small subunit from Ralstonia nicotianae (strain ATCC BAA-1114 / GMI1000) (Ralstonia solanacearum).